Here is a 330-residue protein sequence, read N- to C-terminus: MTNTIDSFQKGSALENYNIWIDCDPGHDDVVALTLAACAGHCKILGVSTVHGNTTLEFTTKNALAVMELLNQDVDVHAGAAKPLMRESAFATHIHGTNGLAGISLLPDYPKKKATPDAVFAMYTTISNYPEPVTLVATGPLTNIALLLATYPSVTDNIERFIFMGGSTGIGNITSQAEFNVYADPEAARLVLETKSLIGKLFMVPLDVTHKVLLDANIIQLLRQHSNPFSSTLVELMTVFQQTYENVYGIRNGVPVHDVCAVALALWPSLWTSRSMYVTVSLDSLTLGRTVCDVWSQQNQYPANVHVVLEADVSLFWETFIGVIDRLNYL.

The active site involves H257.

Belongs to the IUNH family.

This is an uncharacterized protein from Schizosaccharomyces pombe (strain 972 / ATCC 24843) (Fission yeast).